A 129-amino-acid chain; its full sequence is Small ribosomal subunit protein uS11 (129 aa).

The protein belongs to the universal ribosomal protein uS11 family. Part of the 30S ribosomal subunit. Interacts with proteins S7 and S18. Binds to IF-3.

Its function is as follows. Located on the platform of the 30S subunit, it bridges several disparate RNA helices of the 16S rRNA. Forms part of the Shine-Dalgarno cleft in the 70S ribosome. This is Small ribosomal subunit protein uS11 from Bradyrhizobium sp. (strain BTAi1 / ATCC BAA-1182).